A 634-amino-acid chain; its full sequence is Chaperone protein HtpG (634 aa).

Residues 1-342 form an a; substrate-binding region; sequence MSVETQKETL…SNDLSLNVSR (342 aa). The tract at residues 343–559 is b; it reads EILQKDPVID…EQDLGLQMRQ (217 aa). Residues 560–634 are c; the sequence is ILEASGQKVP…LNKLLVELSA (75 aa).

This sequence belongs to the heat shock protein 90 family. As to quaternary structure, homodimer.

It localises to the cytoplasm. Molecular chaperone. Has ATPase activity. The sequence is that of Chaperone protein HtpG from Pseudomonas paraeruginosa (strain DSM 24068 / PA7) (Pseudomonas aeruginosa (strain PA7)).